We begin with the raw amino-acid sequence, 775 residues long: Coiled-coil domain-containing protein R3HCC1L (775 aa).

Composition is skewed to basic and acidic residues over residues 1–16 (MQQEAERCRVRTKRPD) and 65–112 (ESQR…KGAE). 2 disordered regions span residues 1 to 127 (MQQE…HRAP) and 235 to 262 (LSSDSETAPSSLETPDGMSKHSPGDISV). The tract at residues 7–27 (RCRVRTKRPDMALYVPKARRG) is EJC-binding motif; may mediate interaction with the EJC. A compositionally biased stretch (polar residues) spans 235 to 247 (LSSDSETAPSSLE). Residue Ser671 is modified to Phosphoserine. A Phosphothreonine modification is found at Thr695. Residues 734 to 766 (RSKQSKTEREAELRKLQEARERKRLEAKQREDI) are a coiled coil. Positions 755–775 (RKRLEAKQREDIWEGRDQSVV) are disordered.

In terms of assembly, may interact with the exon junction complex (EJC) composed at least of CASC3, EIF4A3, MAGOH and RBM8A.

The polypeptide is Coiled-coil domain-containing protein R3HCC1L (R3hcc1l) (Mus musculus (Mouse)).